A 460-amino-acid polypeptide reads, in one-letter code: tRNA-2-methylthio-N(6)-dimethylallyladenosine synthase (460 aa).

One can recognise an MTTase N-terminal domain in the interval 23–138; that stretch reads RKVYVHTFGC…LPEMVARAER (116 aa). Residues Cys32, Cys68, Cys101, Cys176, Cys180, and Cys183 each coordinate [4Fe-4S] cluster. The Radical SAM core domain occupies 162-394; the sequence is ARGRPTAFVT…QAAQRRIAAA (233 aa). Residues 397 to 460 form the TRAM domain; that stretch reads AAELGKVVEV…GGSSLSGTPA (64 aa).

Belongs to the methylthiotransferase family. MiaB subfamily. As to quaternary structure, monomer. Requires [4Fe-4S] cluster as cofactor.

The protein localises to the cytoplasm. The catalysed reaction is N(6)-dimethylallyladenosine(37) in tRNA + (sulfur carrier)-SH + AH2 + 2 S-adenosyl-L-methionine = 2-methylsulfanyl-N(6)-dimethylallyladenosine(37) in tRNA + (sulfur carrier)-H + 5'-deoxyadenosine + L-methionine + A + S-adenosyl-L-homocysteine + 2 H(+). Catalyzes the methylthiolation of N6-(dimethylallyl)adenosine (i(6)A), leading to the formation of 2-methylthio-N6-(dimethylallyl)adenosine (ms(2)i(6)A) at position 37 in tRNAs that read codons beginning with uridine. In Anaeromyxobacter sp. (strain Fw109-5), this protein is tRNA-2-methylthio-N(6)-dimethylallyladenosine synthase.